The following is a 388-amino-acid chain: Succinate--CoA ligase [ADP-forming] subunit beta (388 aa).

In terms of domain architecture, ATP-grasp spans 9 to 244; the sequence is KQLFARYGLP…QSQEDPREAQ (236 aa). Residues Lys46, 53 to 55, Glu99, Thr102, and Glu107 each bind ATP; that span reads GRG. Mg(2+) contacts are provided by Asn199 and Asp213. Substrate is bound by residues Asn264 and 321-323; that span reads GIV.

This sequence belongs to the succinate/malate CoA ligase beta subunit family. In terms of assembly, heterotetramer of two alpha and two beta subunits. Mg(2+) is required as a cofactor.

The catalysed reaction is succinate + ATP + CoA = succinyl-CoA + ADP + phosphate. The enzyme catalyses GTP + succinate + CoA = succinyl-CoA + GDP + phosphate. The protein operates within carbohydrate metabolism; tricarboxylic acid cycle; succinate from succinyl-CoA (ligase route): step 1/1. Its function is as follows. Succinyl-CoA synthetase functions in the citric acid cycle (TCA), coupling the hydrolysis of succinyl-CoA to the synthesis of either ATP or GTP and thus represents the only step of substrate-level phosphorylation in the TCA. The beta subunit provides nucleotide specificity of the enzyme and binds the substrate succinate, while the binding sites for coenzyme A and phosphate are found in the alpha subunit. This is Succinate--CoA ligase [ADP-forming] subunit beta from Salmonella arizonae (strain ATCC BAA-731 / CDC346-86 / RSK2980).